Consider the following 208-residue polypeptide: MDMGIPCSQLARRLLGKMLCRRIEGRTTKGMIVETEAYLGKEDKACHSYGGRRTERNSAMYMKAGTCYVYRIYGRYECFNISSVEAGAGVLVRALEPLCGVSEMRERRGGRVKDRDIANGPSKLCIAMGITRREIDKEWIAGSEKIWLEEGREVADPEIVAGRRIGIRNCGEWEEKKLRFYIRDNEFVSCIRRRELGNRKHGSVQQLP.

This sequence belongs to the DNA glycosylase MPG family.

The protein resides in the nucleus. The catalysed reaction is Hydrolysis of alkylated DNA, releasing 3-methyladenine, 3-methylguanine, 7-methylguanine and 7-methyladenine.. In terms of biological role, hydrolysis of the deoxyribose N-glycosidic bond to excise 3-methyladenine, and 7-methylguanine from the damaged DNA polymer formed by alkylation lesions. The sequence is that of Probable DNA-3-methyladenine glycosylase from Encephalitozoon cuniculi (strain GB-M1) (Microsporidian parasite).